Consider the following 201-residue polypeptide: MFITFEGGEGSGKTTLIEKLKHTLLEKKYDVLTTREPGGSKVAEKIRSVLLDNKNTEITAHTEALLFAASRAQHLDEVIIPNLDKVILCDRYIDSSYAYQAFGRNLGMEFVQSINSYALKYLPDLTFYIDLDPKTGIDRVKKNRLHKTDRLDMEVQTFHQKVREGYIRISEMFKERIVVIDGNQSIDAIYQIIMDNILKRL.

Residue 7–14 participates in ATP binding; that stretch reads GGEGSGKT.

It belongs to the thymidylate kinase family.

The enzyme catalyses dTMP + ATP = dTDP + ADP. In terms of biological role, phosphorylation of dTMP to form dTDP in both de novo and salvage pathways of dTTP synthesis. The polypeptide is Thymidylate kinase (Acholeplasma laidlawii (strain PG-8A)).